The chain runs to 277 residues: Putative gamma-glutamylcyclotransferase YkqA (277 aa).

8–11 (YGTL) is a binding site for substrate. Glu205 functions as the Proton acceptor in the catalytic mechanism.

The protein belongs to the gamma-glutamylcyclotransferase family.

Functionally, putative gamma-glutamylcyclotransferase. This is Putative gamma-glutamylcyclotransferase YkqA (ykqA) from Bacillus subtilis (strain 168).